A 119-amino-acid chain; its full sequence is Large ribosomal subunit protein bL20 (119 aa).

The protein belongs to the bacterial ribosomal protein bL20 family.

Its function is as follows. Binds directly to 23S ribosomal RNA and is necessary for the in vitro assembly process of the 50S ribosomal subunit. It is not involved in the protein synthesizing functions of that subunit. The protein is Large ribosomal subunit protein bL20 of Chloroflexus aggregans (strain MD-66 / DSM 9485).